We begin with the raw amino-acid sequence, 472 residues long: MAGGEAGVTLGQPHLSRQDLATLDVSKLTPLSHEVISRQATINIGTIGHVAHGKSTVVKAISGVHTVRFKNELERNITIKLGYANAKIYKLDDPSCPRPECYRSCGSSTPDEFPTDIPGTKGNFKLVRHVSFVDCPGHDILMATMLNGAAVMDAALLLIAGNESCPQPQTSEHLAAIEIMKLKHILILQNKIDLVKESQAKEQYEQILAFVQGTVAEGAPIIPISAQLKYNIEVVCEYIVKKIPVPPRDFTSEPRLIVIRSFDVNKPGCEVDDLKGGVAGGSILKGVLKVGQEIEVRPGIVSKDSEGKLMCKPIFSKIVSLFAEHNDLQYAAPGGLIGVGTKIDPTLCRADRMVGQVLGAVGALPEIFTELEISYFLLRRLLGVRTEGDKKAAKVQKLSKNEVLMVNIGSLSTGGRVSAVKADLGKIVLTNPVCTEVGEKIALSRRVEKHWRLIGWGQIRRGVTIKPTVDDD.

An N-acetylalanine modification is found at alanine 2. Serine 16 carries the post-translational modification Phosphoserine. The tr-type G domain maps to 39 to 248 (QATINIGTIG…IVKKIPVPPR (210 aa)). The interval 48 to 55 (GHVAHGKS) is G1. A GTP-binding site is contributed by 51–56 (AHGKST). The segment at 76-80 (NITIK) is G2. A G3 region spans residues 134–137 (DCPG). GTP-binding positions include 190 to 193 (NKID) and 225 to 227 (SAQ). The G4 stretch occupies residues 190–193 (NKID). The tract at residues 225-227 (SAQ) is G5. Residues 457 to 469 (GQIRRGVTIKPTV) form an interacts with CDC123 region.

It belongs to the TRAFAC class translation factor GTPase superfamily. Classic translation factor GTPase family. EIF2G subfamily. As to quaternary structure, eukaryotic translation initiation factor 2 eIF2 is a heterotrimeric complex composed of an alpha (EIF2S1), a beta (EIF2S2) and a gamma (EIF2S3) chain. eIF2 is member of the 43S pre-initiation complex (43S PIC). Interacts (via C-terminus) with CDC123; the interaction is direct.

It is found in the cytoplasm. It localises to the cytosol. The enzyme catalyses GTP + H2O = GDP + phosphate + H(+). Its function is as follows. Member of the eIF2 complex that functions in the early steps of protein synthesis by forming a ternary complex with GTP and initiator tRNA. This complex binds to a 40S ribosomal subunit, followed by mRNA binding to form the 43S pre-initiation complex (43S PIC). Junction of the 60S ribosomal subunit to form the 80S initiation complex is preceded by hydrolysis of the GTP bound to eIF2 and release of an eIF2-GDP binary complex. In order for eIF2 to recycle and catalyze another round of initiation, the GDP bound to eIF2 must exchange with GTP by way of a reaction catalyzed by eIF-2B. In Bos taurus (Bovine), this protein is Eukaryotic translation initiation factor 2 subunit 3 (EIF2S3).